The following is a 362-amino-acid chain: Chemerin-like receptor 1 (362 aa).

Residues M1–L37 lie on the Extracellular side of the membrane. Residue N7 is glycosylated (N-linked (GlcNAc...) asparagine). A helical transmembrane segment spans residues L38 to V58. At M59–T70 the chain is on the cytoplasmic side. The helical transmembrane segment at V71–I91 threads the bilayer. Over A92 to K108 the chain is Extracellular. C107 and C184 are joined by a disulfide. A helical transmembrane segment spans residues I109–S129. Residues F130 to A151 lie on the Cytoplasmic side of the membrane. A helical transmembrane segment spans residues Y152–F172. Over R173 to R219 the chain is Extracellular. N187 carries N-linked (GlcNAc...) asparagine glycosylation. Residues F220–Y240 traverse the membrane as a helical segment. At K241–K255 the chain is on the cytoplasmic side. Residues I256 to L276 traverse the membrane as a helical segment. At L277–R281 the chain is on the extracellular side. The chain crosses the membrane as a helical span at residues G282–A302. The Cytoplasmic segment spans residues N303 to L362. At S334 the chain carries Phosphoserine. The segment at D336–L362 is disordered. A Phosphothreonine modification is found at T337. Over residues H339 to M354 the composition is skewed to polar residues. Phosphoserine is present on residues S344, S347, and S353.

Belongs to the chemokine-like receptor (CMKLR) family. Widely expressed in several tissues including adipose, muscle, liver and brain.

The protein localises to the cell membrane. Functionally, receptor for the chemoattractant adipokine chemerin/RARRES2 and for the omega-3 fatty acid derived molecule resolvin E1. Interaction with RARRES2 initiates activation of G proteins G(i)/G(o) and beta-arrestin pathways inducing cellular responses via second messenger pathways such as intracellular calcium mobilization, phosphorylation of MAP kinases MAPK1/MAPK3 (ERK1/2), TYRO3, MAPK14/P38MAPK and PI3K leading to multifunctional effects, like, reduction of immune responses, enhancing of adipogenesis and angionesis. Resolvin E1 down-regulates cytokine production in macrophages by reducing the activation of MAPK1/3 (ERK1/2) and NF-kappa-B. Positively regulates adipogenesis and adipocyte metabolism. In Bos taurus (Bovine), this protein is Chemerin-like receptor 1 (CMLKR1).